A 102-amino-acid chain; its full sequence is MYAIIATGGKQYTVSEGDTIRVEKLAVNAGDTVTFDQVLFVNNGEAKVGEPTVAGATVTASVVGEGRDKKVIVYKYKRKTGYHKKNGHRQAYTEVKIEKINA.

Belongs to the bacterial ribosomal protein bL21 family. Part of the 50S ribosomal subunit. Contacts protein L20.

This protein binds to 23S rRNA in the presence of protein L20. The protein is Large ribosomal subunit protein bL21 of Lachnospira eligens (strain ATCC 27750 / DSM 3376 / VPI C15-48 / C15-B4) (Eubacterium eligens).